Here is a 192-residue protein sequence, read N- to C-terminus: Inosine triphosphate pyrophosphatase (192 aa).

10–15 (TGNANK) provides a ligand contact to ITP. E46 lines the Mg(2+) pocket. ITP is bound by residues K58, 74 to 75 (DT), K91, 149 to 152 (FGWD), K172, and 177 to 178 (HR).

It belongs to the HAM1 NTPase family. In terms of assembly, homodimer. Requires Mg(2+) as cofactor. It depends on Mn(2+) as a cofactor.

Its subcellular location is the cytoplasm. It localises to the nucleus. It carries out the reaction ITP + H2O = IMP + diphosphate + H(+). The enzyme catalyses dITP + H2O = dIMP + diphosphate + H(+). The catalysed reaction is XTP + H2O = XMP + diphosphate + H(+). In terms of biological role, pyrophosphatase that hydrolyzes non-canonical purine nucleotides such as inosine triphosphate (ITP), deoxyinosine triphosphate (dITP) or xanthosine 5'-triphosphate (XTP) to their respective monophosphate derivatives. The enzyme does not distinguish between the deoxy- and ribose forms. Probably excludes non-canonical purines from RNA and DNA precursor pools, thus preventing their incorporation into RNA and DNA and avoiding chromosomal lesions. The protein is Inosine triphosphate pyrophosphatase of Puccinia graminis f. sp. tritici (strain CRL 75-36-700-3 / race SCCL) (Black stem rust fungus).